Here is a 196-residue protein sequence, read N- to C-terminus: Secreted phosphoprotein 24 (196 aa).

The signal sequence occupies residues 1–19; it reads MKWCGVLMVALLQSLCCSG. 2 disulfides stabilise this stretch: C83-C94 and C107-C125. Positions 125–196 are disordered; it reads CGQDSSSSES…RGDSFGNHLE (72 aa). The span at 129–138 shows a compositional bias: low complexity; sequence SSSSESSSEE.

This sequence belongs to the SPP2 family. In terms of processing, multiply phosphorylated at serine residues.

Its subcellular location is the secreted. Functionally, could coordinate an aspect of bone turnover. The chain is Secreted phosphoprotein 24 (spp2) from Salmo salar (Atlantic salmon).